The following is a 413-amino-acid chain: Probable inactive allantoicase (413 aa).

The protein belongs to the allantoicase family.

Functionally, the function of this enzyme is unclear as allantoicase activity is not known to exist in mammals. This Rattus norvegicus (Rat) protein is Probable inactive allantoicase.